We begin with the raw amino-acid sequence, 909 residues long: Coatomer subunit beta'-3 (909 aa).

WD repeat units follow at residues 13-52 (QRSE…ITKS), 55-94 (VTEL…KVKV), 97-136 (AHSD…ACTQ), 140-180 (GHSH…PNFT), 183-224 (AHQK…CVQT), 227-266 (GHTH…LENT), 269-309 (YGLE…ASMD), 351-390 (TCDL…RSFG), and 461-501 (QIDV…SHFD). The interval 862–909 (EENGHVENEGDEEEQQEEEVNEEEGVVDADSTDGAVLVNGSEVLTPHP) is disordered. Over residues 870-892 (EGDEEEQQEEEVNEEEGVVDADS) the composition is skewed to acidic residues.

Belongs to the WD repeat COPB2 family. As to quaternary structure, oligomeric complex that consists of at least the alpha, beta, beta', gamma, delta, epsilon and zeta subunits.

It localises to the cytoplasm. The protein localises to the golgi apparatus membrane. The protein resides in the cytoplasmic vesicle. It is found in the COPI-coated vesicle membrane. Functionally, the coatomer is a cytosolic protein complex that binds to dilysine motifs and reversibly associates with Golgi non-clathrin-coated vesicles, which further mediate biosynthetic protein transport from the ER, via the Golgi up to the trans Golgi network. Coatomer complex is required for budding from Golgi membranes, and is essential for the retrograde Golgi-to-ER transport of dilysine-tagged proteins. This is Coatomer subunit beta'-3 from Arabidopsis thaliana (Mouse-ear cress).